The primary structure comprises 124 residues: Heat-labile enterotoxin B chain (124 aa).

Residues 1 to 21 (MNKVKFYVLFTALLSSLCAHG) form the signal peptide. A disulfide bridge connects residues C30 and C107.

In terms of assembly, heterohexamer of one A chain and of five B chains.

Its function is as follows. The biological activity of the toxin is produced by the A chain, which activates intracellular adenyl cyclase. The chain is Heat-labile enterotoxin B chain (eltB) from Escherichia coli.